A 60-amino-acid chain; its full sequence is Probable tautomerase SP_1017 (60 aa).

Proline 2 acts as the Proton acceptor; via imino nitrogen in catalysis.

It belongs to the 4-oxalocrotonate tautomerase family.

The sequence is that of Probable tautomerase SP_1017 from Streptococcus pneumoniae serotype 4 (strain ATCC BAA-334 / TIGR4).